The following is a 248-amino-acid chain: AA9 family lytic polysaccharide monooxygenase G (248 aa).

Residues 1 to 21 form the signal peptide; it reads MLPNAAGLLVAGVVSLSGVAA. H22 contributes to the Cu(2+) binding site. N58 carries N-linked (GlcNAc...) asparagine glycosylation. C77 and C195 are oxidised to a cystine. H107 is a Cu(2+) binding site. Position 190 (Q190) interacts with O2. Y192 contacts Cu(2+). N203 is a glycosylation site (N-linked (GlcNAc...) asparagine).

It belongs to the polysaccharide monooxygenase AA9 family. Requires Cu(2+) as cofactor.

The protein localises to the secreted. The enzyme catalyses [(1-&gt;4)-beta-D-glucosyl]n+m + reduced acceptor + O2 = 4-dehydro-beta-D-glucosyl-[(1-&gt;4)-beta-D-glucosyl]n-1 + [(1-&gt;4)-beta-D-glucosyl]m + acceptor + H2O.. Its function is as follows. Lytic polysaccharide monooxygenase (LPMO) that depolymerizes crystalline and amorphous polysaccharides via the oxidation of scissile alpha- or beta-(1-4)-glycosidic bonds, yielding C1 or C4 oxidation products. Catalysis by LPMOs requires the reduction of the active-site copper from Cu(II) to Cu(I) by a reducing agent and H(2)O(2) or O(2) as a cosubstrate. The chain is AA9 family lytic polysaccharide monooxygenase G from Malbranchea cinnamomea (Thermophilic fungus).